The sequence spans 242 residues: Probable transcriptional regulatory protein PXO_01555 (242 aa).

This sequence belongs to the TACO1 family.

Its subcellular location is the cytoplasm. The sequence is that of Probable transcriptional regulatory protein PXO_01555 from Xanthomonas oryzae pv. oryzae (strain PXO99A).